The chain runs to 570 residues: Hydroxylamine reductase (570 aa).

The [4Fe-4S] cluster site is built by cysteine 5, cysteine 8, cysteine 17, and cysteine 23. The hybrid [4Fe-2O-2S] cluster site is built by histidine 266, glutamate 290, cysteine 334, cysteine 425, cysteine 453, cysteine 478, glutamate 513, and lysine 515. Cysteine 425 carries the cysteine persulfide modification.

This sequence belongs to the HCP family. The cofactor is [4Fe-4S] cluster. It depends on hybrid [4Fe-2O-2S] cluster as a cofactor.

It is found in the cytoplasm. It catalyses the reaction A + NH4(+) + H2O = hydroxylamine + AH2 + H(+). In terms of biological role, catalyzes the reduction of hydroxylamine to form NH(3) and H(2)O. In Clostridium botulinum (strain Langeland / NCTC 10281 / Type F), this protein is Hydroxylamine reductase.